Reading from the N-terminus, the 353-residue chain is UDP-galactose transporter (353 aa).

6 consecutive transmembrane segments (helical) span residues 147–167 (LGPM…IVQL), 184–204 (VTGF…GVYF), 215–235 (LWVR…FTIL), 254–274 (IVWL…LCVA), 279–299 (IMKN…SVYL), and 302–322 (FKIS…TFLY). The segment at 325–353 (PESKPSPSRGTYIPMTTQDAAAKDVDHKH) is disordered. A compositionally biased stretch (polar residues) spans 329–343 (PSPSRGTYIPMTTQD).

This sequence belongs to the nucleotide-sugar transporter family. SLC35A subfamily.

The protein resides in the golgi apparatus membrane. Its function is as follows. Essential for the transport of UDP-galactose into the lumen of Golgi apparatus. This Schizosaccharomyces pombe (strain 972 / ATCC 24843) (Fission yeast) protein is UDP-galactose transporter (gms1).